The primary structure comprises 77 residues: Translation initiation factor IF-1, chloroplastic (77 aa).

In terms of domain architecture, S1-like spans 1–71; the sequence is MKEQKLIHEG…TKGRIIYRLR (71 aa).

The protein belongs to the IF-1 family. As to quaternary structure, component of the 30S ribosomal translation pre-initiation complex which assembles on the 30S ribosome in the order IF-2 and IF-3, IF-1 and N-formylmethionyl-tRNA(fMet); mRNA recruitment can occur at any time during PIC assembly.

It is found in the plastid. It localises to the chloroplast. Its function is as follows. One of the essential components for the initiation of protein synthesis. Stabilizes the binding of IF-2 and IF-3 on the 30S subunit to which N-formylmethionyl-tRNA(fMet) subsequently binds. Helps modulate mRNA selection, yielding the 30S pre-initiation complex (PIC). Upon addition of the 50S ribosomal subunit IF-1, IF-2 and IF-3 are released leaving the mature 70S translation initiation complex. This chain is Translation initiation factor IF-1, chloroplastic, found in Dioscorea elephantipes (Elephant's foot yam).